Here is a 446-residue protein sequence, read N- to C-terminus: Probable D-serine dehydratase (446 aa).

Lys-116 bears the N6-(pyridoxal phosphate)lysine mark.

It belongs to the serine/threonine dehydratase family. DsdA subfamily. Pyridoxal 5'-phosphate is required as a cofactor.

The enzyme catalyses D-serine = pyruvate + NH4(+). The protein is Probable D-serine dehydratase of Bacillus anthracis (strain CDC 684 / NRRL 3495).